The chain runs to 378 residues: Glutamate 5-kinase (378 aa).

Lysine 19 serves as a coordination point for ATP. Substrate-binding residues include serine 60, aspartate 147, and asparagine 159. ATP-binding positions include 179–180 (SD) and 221–227 (SGGMRTK). The PUA domain maps to 285 to 362 (KGTLTIDAGA…GEMEQLLGYR (78 aa)).

It belongs to the glutamate 5-kinase family.

It localises to the cytoplasm. It carries out the reaction L-glutamate + ATP = L-glutamyl 5-phosphate + ADP. Its pathway is amino-acid biosynthesis; L-proline biosynthesis; L-glutamate 5-semialdehyde from L-glutamate: step 1/2. In terms of biological role, catalyzes the transfer of a phosphate group to glutamate to form L-glutamate 5-phosphate. The protein is Glutamate 5-kinase of Gluconobacter oxydans (strain 621H) (Gluconobacter suboxydans).